A 426-amino-acid chain; its full sequence is Histidine--tRNA ligase (426 aa).

The protein belongs to the class-II aminoacyl-tRNA synthetase family. In terms of assembly, homodimer.

Its subcellular location is the cytoplasm. It catalyses the reaction tRNA(His) + L-histidine + ATP = L-histidyl-tRNA(His) + AMP + diphosphate + H(+). The chain is Histidine--tRNA ligase from Streptococcus pyogenes serotype M49 (strain NZ131).